We begin with the raw amino-acid sequence, 182 residues long: UPF0149 protein HI_0817 (182 aa).

Belongs to the UPF0149 family.

This chain is UPF0149 protein HI_0817, found in Haemophilus influenzae (strain ATCC 51907 / DSM 11121 / KW20 / Rd).